A 129-amino-acid polypeptide reads, in one-letter code: Putative zinc finger protein 702 (129 aa).

C2H2-type zinc fingers lie at residues 34-56 (YKCD…HRCH), 62-84 (YKCN…KAIH), and 90-112 (HKCN…HRLH).

It belongs to the krueppel C2H2-type zinc-finger protein family.

It localises to the nucleus. In terms of biological role, may be involved in transcriptional regulation. This Homo sapiens (Human) protein is Putative zinc finger protein 702 (ZNF702P).